The following is a 37-amino-acid chain: Large ribosomal subunit protein bL36 (37 aa).

It belongs to the bacterial ribosomal protein bL36 family.

The polypeptide is Large ribosomal subunit protein bL36 (Solidesulfovibrio magneticus (strain ATCC 700980 / DSM 13731 / RS-1) (Desulfovibrio magneticus)).